Here is a 273-residue protein sequence, read N- to C-terminus: Shikimate dehydrogenase (NADP(+)) (273 aa).

Residues 15 to 17 and Thr62 each bind shikimate; that span reads SQS. Lys66 acts as the Proton acceptor in catalysis. Glu78 is a binding site for NADP(+). 2 residues coordinate shikimate: Asn87 and Asp102. Residues 127–131, 151–156, and Met215 contribute to the NADP(+) site; these read GAGGA and NRTVIK. Tyr217 contributes to the shikimate binding site. Gly239 is an NADP(+) binding site.

The protein belongs to the shikimate dehydrogenase family. As to quaternary structure, homodimer.

The catalysed reaction is shikimate + NADP(+) = 3-dehydroshikimate + NADPH + H(+). It participates in metabolic intermediate biosynthesis; chorismate biosynthesis; chorismate from D-erythrose 4-phosphate and phosphoenolpyruvate: step 4/7. In terms of biological role, involved in the biosynthesis of the chorismate, which leads to the biosynthesis of aromatic amino acids. Catalyzes the reversible NADPH linked reduction of 3-dehydroshikimate (DHSA) to yield shikimate (SA). This Chromobacterium violaceum (strain ATCC 12472 / DSM 30191 / JCM 1249 / CCUG 213 / NBRC 12614 / NCIMB 9131 / NCTC 9757 / MK) protein is Shikimate dehydrogenase (NADP(+)).